Consider the following 595-residue polypeptide: Aspartate--tRNA ligase (595 aa).

An L-aspartate-binding site is contributed by E176. The interval 200-203 is aspartate; it reads QIFK. R222 provides a ligand contact to L-aspartate. Residues 222–224 and Q231 each bind ATP; that span reads RDE. H450 contributes to the L-aspartate binding site. E484 contacts ATP. R491 lines the L-aspartate pocket. 536–539 is an ATP binding site; the sequence is GLDR.

This sequence belongs to the class-II aminoacyl-tRNA synthetase family. Type 1 subfamily. Homodimer.

It localises to the cytoplasm. It catalyses the reaction tRNA(Asp) + L-aspartate + ATP = L-aspartyl-tRNA(Asp) + AMP + diphosphate. Catalyzes the attachment of L-aspartate to tRNA(Asp) in a two-step reaction: L-aspartate is first activated by ATP to form Asp-AMP and then transferred to the acceptor end of tRNA(Asp). This Halalkalibacterium halodurans (strain ATCC BAA-125 / DSM 18197 / FERM 7344 / JCM 9153 / C-125) (Bacillus halodurans) protein is Aspartate--tRNA ligase.